The sequence spans 61 residues: Large ribosomal subunit protein uL30 (61 aa).

Belongs to the universal ribosomal protein uL30 family. Part of the 50S ribosomal subunit.

In Saccharophagus degradans (strain 2-40 / ATCC 43961 / DSM 17024), this protein is Large ribosomal subunit protein uL30.